The sequence spans 690 residues: Elongation factor G (690 aa).

Residues S8–N283 form the tr-type G domain. GTP-binding positions include A17–T24, D81–H85, and N135–D138.

The protein belongs to the TRAFAC class translation factor GTPase superfamily. Classic translation factor GTPase family. EF-G/EF-2 subfamily.

Its subcellular location is the cytoplasm. In terms of biological role, catalyzes the GTP-dependent ribosomal translocation step during translation elongation. During this step, the ribosome changes from the pre-translocational (PRE) to the post-translocational (POST) state as the newly formed A-site-bound peptidyl-tRNA and P-site-bound deacylated tRNA move to the P and E sites, respectively. Catalyzes the coordinated movement of the two tRNA molecules, the mRNA and conformational changes in the ribosome. This is Elongation factor G from Ehrlichia chaffeensis (strain ATCC CRL-10679 / Arkansas).